The following is a 977-amino-acid chain: Disks large-associated protein 1 (977 aa).

Disordered stretches follow at residues 150–203 (TKSH…GWWS) and 349–371 (KAMG…KVAA). Ser169, Ser356, Ser359, Ser362, Ser366, Ser383, Ser412, Ser415, Ser419, Ser422, Ser431, Ser503, Ser510, and Ser562 each carry phosphoserine. Residue Thr563 is modified to Phosphothreonine. Phosphoserine is present on residues Ser565 and Ser589. A Phosphothreonine modification is found at Thr590. 2 positions are modified to phosphoserine: Ser592 and Ser595. 2 interaction with DYL2 regions span residues 650-661 (LSIGIQVDDAEE) and 672-683 (SKFQSVGVQVEE). The tract at residues 899 to 965 (WKQMDPLDKK…QNSATESAES (67 aa)) is disordered. 2 stretches are compositionally biased toward basic and acidic residues: residues 903–912 (DPLDKKERRA) and 928–943 (IRER…EARK). Ser932 is subject to Phosphoserine. The segment covering 954-963 (VRQNSATESA) has biased composition (polar residues). The PDZ-binding motif lies at 975-977 (TRL).

The protein belongs to the SAPAP family. Interacts with guanylate kinase-like domain of DLG1, DLG2, DLG3, DLG4 and AIP1. Interacts with the PDZ domain of SHANK1, SHANK2 and SHANK3. Found in a complex with DLG4 and SHANK1, SHANK2 or SHANK3. Found in a complex with DLG4 and BEGAIN. Interacts with DYL2 and LRFN1. Interacts with MPP2 (via the SH3-Guanylate kinase-like sub-module). In terms of processing, ubiquitinated by TRIM3; leading to proteasomal degradation. Expressed in brain.

It is found in the cell membrane. The protein localises to the postsynaptic density. Its subcellular location is the synapse. In terms of biological role, part of the postsynaptic scaffold in neuronal cells. The protein is Disks large-associated protein 1 (DLGAP1) of Homo sapiens (Human).